A 562-amino-acid chain; its full sequence is Phosphoenolpyruvate carboxykinase (ATP) (562 aa).

265–272 (GLSGTGKT) lines the ATP pocket.

This sequence belongs to the phosphoenolpyruvate carboxykinase (ATP) family.

The catalysed reaction is oxaloacetate + ATP = phosphoenolpyruvate + ADP + CO2. It functions in the pathway carbohydrate biosynthesis; gluconeogenesis. This Dictyostelium discoideum (Social amoeba) protein is Phosphoenolpyruvate carboxykinase (ATP) (pckA).